The following is a 246-amino-acid chain: MKKQDIIFGIHAVEALLKHSPERIIELWLLQGREDERLTPLIRQAKAFGTSIQVTSRKVLDEKAESTQHQGIVARVKAAKILAEHDLDELLAKTDLPFLLILDGVTDPHNLGACLRNADAAGVQGIIVPKDNSVGLTAVVSKVACGAAETVPLFQVTNLARTMRHLQEKGVWIVGTAGEADCELYQADLKGPLAIAMGAEGKGLRRLSRECCDTLVSIPMSGSVSSLNVSVATGICLFEAVRQRRS.

S-adenosyl-L-methionine is bound by residues Gly-198, Ile-218, and Leu-227.

The protein belongs to the class IV-like SAM-binding methyltransferase superfamily. RNA methyltransferase TrmH family. RlmB subfamily.

The protein resides in the cytoplasm. It catalyses the reaction guanosine(2251) in 23S rRNA + S-adenosyl-L-methionine = 2'-O-methylguanosine(2251) in 23S rRNA + S-adenosyl-L-homocysteine + H(+). In terms of biological role, specifically methylates the ribose of guanosine 2251 in 23S rRNA. In Shewanella oneidensis (strain ATCC 700550 / JCM 31522 / CIP 106686 / LMG 19005 / NCIMB 14063 / MR-1), this protein is 23S rRNA (guanosine-2'-O-)-methyltransferase RlmB.